The sequence spans 110 residues: Large ribosomal subunit protein uL22 (110 aa).

The protein belongs to the universal ribosomal protein uL22 family. Part of the 50S ribosomal subunit.

Functionally, this protein binds specifically to 23S rRNA; its binding is stimulated by other ribosomal proteins, e.g. L4, L17, and L20. It is important during the early stages of 50S assembly. It makes multiple contacts with different domains of the 23S rRNA in the assembled 50S subunit and ribosome. The globular domain of the protein is located near the polypeptide exit tunnel on the outside of the subunit, while an extended beta-hairpin is found that lines the wall of the exit tunnel in the center of the 70S ribosome. The polypeptide is Large ribosomal subunit protein uL22 (Paraburkholderia phytofirmans (strain DSM 17436 / LMG 22146 / PsJN) (Burkholderia phytofirmans)).